The sequence spans 127 residues: uncharacterized protein (127 aa).

This is an uncharacterized protein from Archaeoglobus fulgidus (strain ATCC 49558 / DSM 4304 / JCM 9628 / NBRC 100126 / VC-16).